Reading from the N-terminus, the 116-residue chain is Large ribosomal subunit protein bL17 (116 aa).

Belongs to the bacterial ribosomal protein bL17 family. In terms of assembly, part of the 50S ribosomal subunit. Contacts protein L32.

The protein is Large ribosomal subunit protein bL17 of Chloroflexus aurantiacus (strain ATCC 29366 / DSM 635 / J-10-fl).